The sequence spans 401 residues: E3 ubiquitin-protein ligase RGLG4 (401 aa).

A disordered region spans residues 1 to 43; the sequence is MTMGNFLKRFGSGKSRSSRNMTLGTTSSQSHEPSPSDPSLSLA. The span at 8–19 shows a compositional bias: low complexity; that stretch reads KRFGSGKSRSSR. Over residues 20 to 32 the composition is skewed to polar residues; that stretch reads NMTLGTTSSQSHE. The region spanning 79–299 is the VWFA domain; it reads NLILGVDFTK…KETAFALAAL (221 aa). Positions 326–350 are disordered; sequence VPRPPPIPYTPPTNAELPSTASPAS. The span at 327–336 shows a compositional bias: pro residues; that stretch reads PRPPPIPYTP. A compositionally biased stretch (polar residues) spans 341 to 350; that stretch reads ELPSTASPAS. The segment at 357-390 adopts an RING-type zinc-finger fold; that stretch reads CPICLTNRKDVAFSCGHMTCGDCGSKISNCPICR.

Interacts with UBC30, GRXS17 and GLB3. As to expression, widely expressed.

The protein localises to the cytoplasm. It localises to the nucleus. The enzyme catalyses S-ubiquitinyl-[E2 ubiquitin-conjugating enzyme]-L-cysteine + [acceptor protein]-L-lysine = [E2 ubiquitin-conjugating enzyme]-L-cysteine + N(6)-ubiquitinyl-[acceptor protein]-L-lysine.. In terms of biological role, possesses E3 ubiquitin-protein ligase in vitro. Acts as upstream modulator of jasmonate (JA) signaling in response to various stimuli, such as JA-inhibited root growth, JA-inductive gene expression, coronatine-mediated pathogen susceptibility, wound-stimulated expression of JA-responsive genes and wound-induced JA biosynthesis. Controls fumonisin B1 (FB1)-triggered programmed cell death (PCD) by modulating the JA signaling pathway. May mediate salicylic acid (SA) suppression of JA signaling in FB1-induced responses. May mediate the formation of 'Lys-48'-linked multiubiquitin chains. Mediates the polyubiquitination and subsequent proteasomal degradation of the target protein GRXS17. The protein is E3 ubiquitin-protein ligase RGLG4 of Arabidopsis thaliana (Mouse-ear cress).